Consider the following 323-residue polypeptide: Ribose 1,5-bisphosphate isomerase (323 aa).

Residues R22 to A25 and R65 contribute to the substrate site. The Proton acceptor role is filled by C130. The Proton donor role is filled by D199. Substrate is bound by residues N209–K210 and K235. K210 participates in a covalent cross-link: Glycyl lysine isopeptide (Lys-Gly) (interchain with G-Cter in SAMP2).

This sequence belongs to the eIF-2B alpha/beta/delta subunits family. R15P isomerase subfamily.

The catalysed reaction is alpha-D-ribose 1,5-bisphosphate = D-ribulose 1,5-bisphosphate. Catalyzes the isomerization of ribose 1,5-bisphosphate (R15P) to ribulose 1,5-bisphosphate (RuBP), the CO(2) acceptor and substrate for RubisCO. Functions in an archaeal AMP degradation pathway, together with AMP phosphorylase and RubisCO. The chain is Ribose 1,5-bisphosphate isomerase from Haloferax volcanii (strain ATCC 29605 / DSM 3757 / JCM 8879 / NBRC 14742 / NCIMB 2012 / VKM B-1768 / DS2) (Halobacterium volcanii).